A 690-amino-acid chain; its full sequence is CREB-H transcription factor homolog let-607 (690 aa).

3 disordered regions span residues 87-118, 166-192, and 205-253; these read NDNC…SSGG, SAVH…SNGL, and PASI…KYPP. 3 stretches are compositionally biased toward low complexity: residues 100–116, 170–181, and 213–236; these read SLPI…YHSS, QNQQQQQRRLNQ, and PSSS…SSST. Residues 284 to 347 form the bZIP domain; sequence DLKRIRRKIR…QSVISQLKKL (64 aa). The tract at residues 286 to 321 is basic motif; it reads KRIRRKIRNKRSAQTSRKRKQDYIEQLEDRVSESTK. Residues 295–350 adopt a coiled-coil conformation; the sequence is KRSAQTSRKRKQDYIEQLEDRVSESTKENQALKQQIERLSSENQSVISQLKKLQAQ. The tract at residues 326–333 is leucine-zipper; sequence LKQQIERL. Residues 451–464 are compositionally biased toward polar residues; sequence HNNSKYPASGNQNH. Disordered regions lie at residues 451–495 and 509–536; these read HNNS…SMYR and GARK…ATSP. 2 stretches are compositionally biased toward low complexity: residues 480-492 and 514-535; these read QPKQ…HQPS and SSTS…SATS.

The protein belongs to the bZIP family.

It localises to the nucleus. In terms of biological role, probable transcription factor, required during migration of the gonadal distal tip cells (DTC). Probably regulates cell adhesion of DTCs via modulation of expression of genes involved in integrin-mediated adhesion, including tln-1, src-1, and integrin pat-2. Modulates expression of genes involved in protein trafficking during embryogenesis, including emo-1, sec-61, calu-1, sec-24.1, enpl-1, sar-1 and tfg-1. The sequence is that of CREB-H transcription factor homolog let-607 from Caenorhabditis elegans.